Consider the following 320-residue polypeptide: Glucokinase (320 aa).

Position 12 to 17 (12 to 17) interacts with ATP; that stretch reads GDIGGT.

It belongs to the bacterial glucokinase family.

It localises to the cytoplasm. The catalysed reaction is D-glucose + ATP = D-glucose 6-phosphate + ADP + H(+). This chain is Glucokinase, found in Nitrobacter hamburgensis (strain DSM 10229 / NCIMB 13809 / X14).